A 150-amino-acid chain; its full sequence is Arginine repressor (150 aa).

The protein belongs to the ArgR family.

The protein localises to the cytoplasm. Its pathway is amino-acid biosynthesis; L-arginine biosynthesis [regulation]. Regulates arginine biosynthesis genes. The polypeptide is Arginine repressor (Staphylococcus aureus (strain Mu3 / ATCC 700698)).